The primary structure comprises 254 residues: Mediator of RNA polymerase II transcription subunit 8 (254 aa).

The stretch at 154 to 190 (LEEREMGIQNVVTGLRRQLEDDERDEDEDEDDEEEEE) forms a coiled coil. Residues 167 to 234 (GLRRQLEDDE…SQQVQKGAGP (68 aa)) form a disordered region. Over residues 173 to 199 (EDDERDEDEDEDDEEEEEGEGEDEEME) the composition is skewed to acidic residues.

This sequence belongs to the Mediator complex subunit 8 family. In terms of assembly, component of the Mediator complex.

The protein resides in the nucleus. Functionally, component of the Mediator complex, a coactivator involved in the regulated transcription of nearly all RNA polymerase II-dependent genes. Mediator functions as a bridge to convey information from gene-specific regulatory proteins to the basal RNA polymerase II transcription machinery. Mediator is recruited to promoters by direct interactions with regulatory proteins and serves as a scaffold for the assembly of a functional preinitiation complex with RNA polymerase II and the general transcription factors. This Aspergillus clavatus (strain ATCC 1007 / CBS 513.65 / DSM 816 / NCTC 3887 / NRRL 1 / QM 1276 / 107) protein is Mediator of RNA polymerase II transcription subunit 8 (med8).